The chain runs to 247 residues: Adenosylcobinamide-GDP ribazoletransferase (247 aa).

A run of 6 helical transmembrane segments spans residues 34–54, 59–79, 113–133, 138–158, 171–191, and 194–214; these read IVMF…IFIL, CGIP…TGGF, GGLA…ELAL, MLAA…LLMY, VFIG…AVIV, and VLLP…AIFI.

Belongs to the CobS family. It depends on Mg(2+) as a cofactor.

Its subcellular location is the cell inner membrane. It catalyses the reaction alpha-ribazole + adenosylcob(III)inamide-GDP = adenosylcob(III)alamin + GMP + H(+). The enzyme catalyses alpha-ribazole 5'-phosphate + adenosylcob(III)inamide-GDP = adenosylcob(III)alamin 5'-phosphate + GMP + H(+). The protein operates within cofactor biosynthesis; adenosylcobalamin biosynthesis; adenosylcobalamin from cob(II)yrinate a,c-diamide: step 7/7. Functionally, joins adenosylcobinamide-GDP and alpha-ribazole to generate adenosylcobalamin (Ado-cobalamin). Also synthesizes adenosylcobalamin 5'-phosphate from adenosylcobinamide-GDP and alpha-ribazole 5'-phosphate. The protein is Adenosylcobinamide-GDP ribazoletransferase of Salmonella schwarzengrund (strain CVM19633).